Here is a 509-residue protein sequence, read N- to C-terminus: Maturase K (509 aa).

The protein belongs to the intron maturase 2 family. MatK subfamily.

It is found in the plastid. Its subcellular location is the chloroplast. In terms of biological role, usually encoded in the trnK tRNA gene intron. Probably assists in splicing its own and other chloroplast group II introns. In Clematis lasiantha (Pipestem clematis), this protein is Maturase K.